A 182-amino-acid chain; its full sequence is Ribosome-recycling factor (182 aa).

The protein belongs to the RRF family.

The protein resides in the cytoplasm. Functionally, responsible for the release of ribosomes from messenger RNA at the termination of protein biosynthesis. May increase the efficiency of translation by recycling ribosomes from one round of translation to another. The chain is Ribosome-recycling factor from Prochlorococcus marinus (strain MIT 9515).